Consider the following 287-residue polypeptide: ATP synthase gamma chain (287 aa).

The protein belongs to the ATPase gamma chain family. F-type ATPases have 2 components, CF(1) - the catalytic core - and CF(0) - the membrane proton channel. CF(1) has five subunits: alpha(3), beta(3), gamma(1), delta(1), epsilon(1). CF(0) has three main subunits: a, b and c.

The protein localises to the cell inner membrane. In terms of biological role, produces ATP from ADP in the presence of a proton gradient across the membrane. The gamma chain is believed to be important in regulating ATPase activity and the flow of protons through the CF(0) complex. The chain is ATP synthase gamma chain from Ectopseudomonas mendocina (strain ymp) (Pseudomonas mendocina).